Here is a 559-residue protein sequence, read N- to C-terminus: Glypican-1 (559 aa).

The first 23 residues, 1–23 (MELRARGWWLLYAAAVLVACARG), serve as a signal peptide directing secretion. Intrachain disulfides connect Cys32–Cys68, Cys62–Cys256, Cys69–Cys259, Cys191–Cys343, Cys246–Cys279, Cys268–Cys415, and Cys272–Cys401. Residues Asn79 and Asn116 are each glycosylated (N-linked (GlcNAc...) asparagine). Residues 478 to 539 (FQDASDDGSG…SAAAPTPPQA (62 aa)) are disordered. O-linked (Xyl...) (heparan sulfate) serine glycosylation is found at Ser486, Ser488, and Ser490. Ser530 carries GPI-anchor amidated serine lipidation. Positions 531-559 (AAAPTPPQASPLLLLGLALALPAVAPRGR) are cleaved as a propeptide — removed in mature form.

The protein belongs to the glypican family. S-nitrosylated in a Cu(2+)-dependent manner. Nitric acid (NO) is released from the nitrosylated cysteines by ascorbate or by some other reducing agent, in a Cu(2+) or Zn(2+) dependent manner. This free nitric oxide is then capable of cleaving the heparan sulfate side chains. In terms of processing, N- and O-glycosylated. N-glycosylation is mainly of the complex type containing sialic acid. O-glycosylated with heparan sulfate. The heparan sulfate chains can be cleaved either by the action of heparanase or, degraded by a deaminative process that uses nitric oxide (NO) released from the S-nitrosylated cysteines. This process is triggered by ascorbate, or by some other reducing agent, in a Cu(2+)- or Zn(2+) dependent manner. Cu(2+) ions are provided by ceruloproteins such as APP, PRNP or CP which associate with GCP1 in intracellular compartments or lipid rafts. Post-translationally, shed from the cell surface probably by further cleavage.

It localises to the cell membrane. The protein resides in the endosome. Its subcellular location is the secreted. The protein localises to the extracellular space. Its function is as follows. Cell surface proteoglycan that bears heparan sulfate. Binds, via the heparan sulfate side chains, alpha-4 (V) collagen and participates in Schwann cell myelination. May act as a catalyst in increasing the rate of conversion of prion protein PRPN (C) to PRNP (Sc) via associating (via the heparan sulfate side chains) with both forms of PRPN, targeting them to lipid rafts and facilitating their interaction. Required for proper skeletal muscle differentiation by sequestering FGF2 in lipid rafts preventing its binding to receptors (FGFRs) and inhibiting the FGF-mediated signaling. The sequence is that of Glypican-1 (GPC1) from Bos taurus (Bovine).